The following is a 203-amino-acid chain: MSQQNASSDIELPHLTGLEARIAERIAPTLADLGYELVRLSVLGRDTPTIQIMADRANGSLISVEDCEQISHAAGAILDVDDPIPGAWMLEVSSAGIDRPLTRAKDWERFAGHLAKAELDVPLNGRRRFSGTVMGARDGNAIIRLDDGTEAVLPLVDIRKARLVLTDALIEASAALAGVSSEGEDGGEARQAPKLNPKKPGKK.

Positions 179–203 (VSSEGEDGGEARQAPKLNPKKPGKK) are disordered.

The protein belongs to the RimP family.

Its subcellular location is the cytoplasm. In terms of biological role, required for maturation of 30S ribosomal subunits. The protein is Ribosome maturation factor RimP of Gluconobacter oxydans (strain 621H) (Gluconobacter suboxydans).